The chain runs to 83 residues: Mu-theraphotoxin-Hhn2k (83 aa).

Residues 1–21 form the signal peptide; sequence MKASMFLALAGLVLLFVVDYA. Residues 22–48 constitute a propeptide that is removed on maturation; that stretch reads SESEEKEFPIELLSKIFAVDVFKGEER. Disulfide bonds link C50/C65, C57/C70, and C64/C77. A Leucine amide modification is found at L81.

This sequence belongs to the neurotoxin 10 (Hwtx-1) family. 15 (Hntx-3) subfamily. In terms of assembly, monomer. In terms of tissue distribution, expressed by the venom gland.

The protein localises to the secreted. In terms of biological role, lethal neurotoxin. Selectively blocks tetrodotoxin-sensitive voltage-gated sodium channels (Nav). Does not affect tetrodotoxin-resistant voltage-gated sodium channels or calcium channels. The sequence is that of Mu-theraphotoxin-Hhn2k from Cyriopagopus hainanus (Chinese bird spider).